Here is a 244-residue protein sequence, read N- to C-terminus: L-xylulose reductase (244 aa).

Position 1 is an N-acetylmethionine (M1). 11–39 provides a ligand contact to NADP(+); that stretch reads LVTGAGKGIGRSTVLALQAAGAHVVAVSR. R21 is subject to Omega-N-methylarginine. Phosphoserine is present on S46. Position 136 (S136) interacts with substrate. Y149 functions as the Proton acceptor in the catalytic mechanism. Residue K153 is part of the active site.

This sequence belongs to the short-chain dehydrogenases/reductases (SDR) family. In terms of assembly, homotetramer. As to expression, highly expressed in kidney and liver. Expressed in epididymis. Weakly expressed in brain, heart, lung, spleen and testis.

It localises to the membrane. The protein resides in the cytoplasmic vesicle. It is found in the secretory vesicle. The protein localises to the acrosome. It catalyses the reaction xylitol + NADP(+) = L-xylulose + NADPH + H(+). Catalyzes the NADPH-dependent reduction of several pentoses, tetroses, trioses, alpha-dicarbonyl compounds and L-xylulose. Participates in the uronate cycle of glucose metabolism. May play a role in the water absorption and cellular osmoregulation in the proximal renal tubules by producing xylitol, an osmolyte, thereby preventing osmolytic stress from occurring in the renal tubules. This Mesocricetus auratus (Golden hamster) protein is L-xylulose reductase (DCXR).